Consider the following 216-residue polypeptide: Glycerol uptake facilitator protein-like 6 (216 aa).

The next 2 membrane-spanning stretches (helical) occupy residues 5–25 (LAEF…VVIA) and 30–50 (LAIG…FGGI). An NPA 1 motif is present at residues 56–58 (NPA). The next 3 membrane-spanning stretches (helical) occupy residues 72–92 (ADAI…SAAV), 114–134 (IGSG…LMVI), and 147–167 (FAGL…LNLT). Residues 172 to 174 (NPA) carry the NPA 2 motif. Residues 191 to 213 (LWVYILAPEVGAILAAFCARVMG) form a helical membrane-spanning segment.

Belongs to the MIP/aquaporin (TC 1.A.8) family.

It is found in the cell membrane. Its function is as follows. Probable transporter that facilitates the transmembrane diffusion of an unknown substrate. Is not permeable to water, dihydroxyacetone, glycerol, urea, H(2)O(2) and D/L-lactic acid. In Lactiplantibacillus plantarum (strain ATCC BAA-793 / NCIMB 8826 / WCFS1) (Lactobacillus plantarum), this protein is Glycerol uptake facilitator protein-like 6.